The chain runs to 439 residues: Ornithine aminotransferase, mitochondrial (439 aa).

A mitochondrion; in hepatic form-targeting transit peptide spans 1–25; it reads MFSKLAHLQRFAVLSRGVHSSVASA. The transit peptide at 1 to 35 directs the protein to the mitochondrion; in renal form; it reads MFSKLAHLQRFAVLSRGVHSSVASATSVATKKTVQ. An N6-acetyllysine mark is found at Lys49 and Lys66. Lys102 is modified (N6-succinyllysine). Lys107 bears the N6-acetyllysine; alternate mark. Lys107 carries the post-translational modification N6-succinyllysine; alternate. N6-(pyridoxal phosphate)lysine is present on Lys292. Lys362 carries the N6-acetyllysine; alternate modification. Lys362 bears the N6-succinyllysine; alternate mark. An N6-acetyllysine mark is found at Lys386 and Lys392. Lys405 carries the post-translational modification N6-acetyllysine; alternate. Residue Lys405 is modified to N6-succinyllysine; alternate. Position 421 is an N6-acetyllysine (Lys421).

This sequence belongs to the class-III pyridoxal-phosphate-dependent aminotransferase family. As to quaternary structure, homohexamer. Pyridoxal 5'-phosphate is required as a cofactor.

Its subcellular location is the mitochondrion matrix. The enzyme catalyses L-ornithine + 2-oxoglutarate = L-glutamate 5-semialdehyde + L-glutamate. The protein operates within amino-acid biosynthesis; L-proline biosynthesis; L-glutamate 5-semialdehyde from L-ornithine: step 1/1. In terms of biological role, catalyzes the reversible interconversion of L-ornithine and 2-oxoglutarate to L-glutamate semialdehyde and L-glutamate. The polypeptide is Ornithine aminotransferase, mitochondrial (OAT) (Homo sapiens (Human)).